The following is a 302-amino-acid chain: UTP--glucose-1-phosphate uridylyltransferase (302 aa).

The protein belongs to the UDPGP type 2 family. In terms of assembly, homotetramer or homopentamer. It depends on Mg(2+) as a cofactor.

The enzyme catalyses alpha-D-glucose 1-phosphate + UTP + H(+) = UDP-alpha-D-glucose + diphosphate. In terms of biological role, may play a role in stationary phase survival. The protein is UTP--glucose-1-phosphate uridylyltransferase (galU) of Escherichia coli O157:H7.